The following is a 329-amino-acid chain: Myoblast determination protein 1 homolog (329 aa).

Residues 160–211 (DRRKAATMRERRRLRKVNEAFEVVKQRTCPNPNQRLPKVEILRSAIDYINTL) form the bHLH domain. Residues 256 to 279 (NPDGPNVYDDEDLSDTDEDRDHHH) are disordered. Residues 263 to 273 (YDDEDLSDTDE) are compositionally biased toward acidic residues.

In terms of assembly, efficient DNA binding requires dimerization with another bHLH protein. Body wall muscle cells; in clonal muscle precursors, in a set of early embryonic blastomeres (the ms-granddaughters), and in six glial-like cells called GLRS.

The protein resides in the nucleus. Functionally, accumulation defines the body wall muscle cell fate during embryogenesis. The polypeptide is Myoblast determination protein 1 homolog (hlh-1) (Caenorhabditis briggsae).